The primary structure comprises 297 residues: Ribosomal RNA small subunit methyltransferase H (297 aa).

Residues 34-36, D54, F81, D99, and Q106 contribute to the S-adenosyl-L-methionine site; that span reads GGH.

The protein belongs to the methyltransferase superfamily. RsmH family.

The protein localises to the cytoplasm. The enzyme catalyses cytidine(1402) in 16S rRNA + S-adenosyl-L-methionine = N(4)-methylcytidine(1402) in 16S rRNA + S-adenosyl-L-homocysteine + H(+). Specifically methylates the N4 position of cytidine in position 1402 (C1402) of 16S rRNA. This is Ribosomal RNA small subunit methyltransferase H from Chlamydia pneumoniae (Chlamydophila pneumoniae).